Reading from the N-terminus, the 181-residue chain is Transcription termination/antitermination protein NusG (181 aa).

The 32-residue stretch at 130 to 161 folds into the KOW domain; it reads PGEMVRVNDGPFADFNGVVEEVDYEKSRLKVS.

This sequence belongs to the NusG family. In terms of assembly, monomer. Interacts with the transcription termination factor Rho and with RNA polymerase.

Participates in transcription elongation, termination and antitermination. In the absence of Rho, increases the rate of transcription elongation by the RNA polymerase (RNAP), probably by partially suppressing pausing. In the presence of Rho, modulates most Rho-dependent termination events by interacting with the RNAP to render the complex more susceptible to the termination activity of Rho. May be required to overcome a kinetic limitation of Rho to function at certain terminators. Also involved in ribosomal RNA transcriptional antitermination. The protein is Transcription termination/antitermination protein NusG of Salmonella typhi.